An 873-amino-acid polypeptide reads, in one-letter code: Sine oculis-binding protein homolog (873 aa).

Residues 1–14 (MAEMEKEGRPPENK) show a composition bias toward basic and acidic residues. Residues 1-26 (MAEMEKEGRPPENKRSRKPAHPVKRE) form a disordered region. 2 consecutive FCS-type zinc fingers follow at residues 142 to 180 (DDVSNVQIMCAWCQKVGIKRYSLSMGSEVKCFCSEKCFA) and 216 to 256 (FKNN…KCLN). Disordered stretches follow at residues 307–338 (ARRKAPSPASAAGQIQGPGPSASTTASPSDTA), 413–485 (RGPP…GAPL), 550–608 (KPPS…NQAQ), 742–766 (STEGSKNPEPPQDPKKPQPPEELAV), and 779–811 (SNCHLEGDTGKKAGEEPLAGGDKQDPNLNNPAD). Positions 312 to 338 (PSPASAAGQIQGPGPSASTTASPSDTA) are enriched in low complexity. Pro residues predominate over residues 460 to 485 (IHPPTTPTMPGNPPGLLPPPPPGAPL). Over residues 554–570 (GFSSNGENFIPSNSSET) the composition is skewed to polar residues. Positions 571 to 603 (PGGKPPNSSSSPRESKQGSSKPSDSSPSCSGQS) are enriched in low complexity. Basic and acidic residues predominate over residues 783-793 (LEGDTGKKAGE).

It belongs to the SOBP family.

In terms of biological role, implicated in development of the cochlea. The polypeptide is Sine oculis-binding protein homolog (Gallus gallus (Chicken)).